The sequence spans 458 residues: RuvB-like helicase 1 (458 aa).

71–78 serves as a coordination point for ATP; the sequence is GGPGTGKT.

Belongs to the RuvB family. As to quaternary structure, may form heterododecamers with hel-2/rvb2. Component of the SWR1 chromatin remodeling complex, the INO80 chromatin remodeling complex, and of the R2TP complex.

The protein localises to the nucleus. It catalyses the reaction ATP + H2O = ADP + phosphate + H(+). DNA helicase which participates in several chromatin remodeling complexes, including the SWR1 and the INO80 complexes. The SWR1 complex mediates the ATP-dependent exchange of histone H2A for the H2A variant H2A.Z leading to transcriptional regulation of selected genes by chromatin remodeling. The INO80 complex remodels chromatin by shifting nucleosomes and is involved in DNA repair. Also involved in pre-rRNA processing. In Neurospora crassa (strain ATCC 24698 / 74-OR23-1A / CBS 708.71 / DSM 1257 / FGSC 987), this protein is RuvB-like helicase 1 (hel-1).